A 248-amino-acid chain; its full sequence is PACRG-like protein (248 aa).

Residue Met1 is modified to N-acetylmethionine. The disordered stretch occupies residues 1–72; that stretch reads MQRSECSGGV…NPKTINPFGE (72 aa). Composition is skewed to polar residues over residues 14-29 and 36-45; these read NRAT…SSTQ and VQRSKSSSLT. Ser47 carries the phosphoserine modification.

The polypeptide is PACRG-like protein (Pacrgl) (Mus musculus (Mouse)).